The sequence spans 151 residues: UPF0735 ACT domain-containing protein SH1278 (151 aa).

In terms of domain architecture, ACT spans 74–149 (TLILYVNDIV…HVSKVELISM (76 aa)).

This sequence belongs to the UPF0735 family.

This Staphylococcus haemolyticus (strain JCSC1435) protein is UPF0735 ACT domain-containing protein SH1278.